Reading from the N-terminus, the 500-residue chain is Intracellular exo-alpha-(1-&gt;5)-L-arabinofuranosidase (500 aa).

Alpha-L-arabinofuranose contacts are provided by Glu-28, Asn-73, and Asn-173. Glu-174 acts as the Proton donor/acceptor in catalysis. Residues Tyr-245, Glu-293, and Gln-350 each contribute to the alpha-L-arabinofuranose site. Glu-293 (nucleophile) is an active-site residue.

This sequence belongs to the glycosyl hydrolase 51 family. Homohexamer; trimer of dimers.

Its subcellular location is the cytoplasm. The catalysed reaction is Hydrolysis of terminal non-reducing alpha-L-arabinofuranoside residues in alpha-L-arabinosides.. It functions in the pathway glycan metabolism; L-arabinan degradation. Its function is as follows. Involved in the degradation of arabinan and is a key enzyme in the complete degradation of the plant cell wall. Catalyzes the cleavage of terminal alpha-(1-&gt;5)-arabinofuranosyl bonds in different hemicellulosic homopolysaccharides (branched and debranched arabinans). The polypeptide is Intracellular exo-alpha-(1-&gt;5)-L-arabinofuranosidase (abfA) (Halalkalibacterium halodurans (strain ATCC BAA-125 / DSM 18197 / FERM 7344 / JCM 9153 / C-125) (Bacillus halodurans)).